A 396-amino-acid polypeptide reads, in one-letter code: MSKEKFTRTKPHVNVGTIGHVDHGKTTLTAALTKCMAAKFGGEFKAYDQIDAAPEERARGITIATAHVEYESAARHYAHVDCPGHADYVKNMITGAAQMDGAILVVSAADGPMPQTREHILLARQVGVPYIVVFLNKADMVDDPELLELVEMEVRELLSKYDFPGDDIPIIKGSALKALEGDGSEIGVPAVEALVQALDDYIPEPERAIDRPFLMPIEDVFSISGRGTVVTGRVERGIIKVGEEIEIVGIRPTAKTTCTGVEMFRKLLDQGQAGDNIGVLLRGTKREDVERGQVLAKPGSITPHTHFEAEIYVLSKEEGGRHTPFFNGYRPQFYFRTTDVTGAVTLPEGVEMVMPGDNVKIEVKLIAPIAMDEGLRFAVREGGRTVGAGVVSKIIE.

One can recognise a tr-type G domain in the interval 10 to 206; that stretch reads KPHVNVGTIG…ALDDYIPEPE (197 aa). Positions 19–26 are G1; the sequence is GHVDHGKT. Residue 19–26 coordinates GTP; the sequence is GHVDHGKT. A Mg(2+)-binding site is contributed by T26. The interval 60-64 is G2; it reads GITIA. The interval 81-84 is G3; the sequence is DCPG. Residues 81-85 and 136-139 contribute to the GTP site; these read DCPGH and NKAD. The interval 136–139 is G4; it reads NKAD. Positions 174 to 176 are G5; sequence SAL.

This sequence belongs to the TRAFAC class translation factor GTPase superfamily. Classic translation factor GTPase family. EF-Tu/EF-1A subfamily. Monomer.

The protein localises to the cytoplasm. It carries out the reaction GTP + H2O = GDP + phosphate + H(+). Its function is as follows. GTP hydrolase that promotes the GTP-dependent binding of aminoacyl-tRNA to the A-site of ribosomes during protein biosynthesis. In Methylococcus capsulatus (strain ATCC 33009 / NCIMB 11132 / Bath), this protein is Elongation factor Tu.